Here is an 857-residue protein sequence, read N- to C-terminus: MTRRRVLSVVVLLAALACRLGAQTPEQPAPPATTVQPTATRQQTSFPFRVCELSSHGDLFRFSSDIQCPSFGTRENHTEGLLMVFKDNIIPYSFKVRSYTKIVTNILIYNGWYADSVTNRHEEKFSVDSYETDQMDTIYQCYNAVKMTKDGLTRVYVDRDGVNITVNLKPTGGLANGVRRYASQTELYDAPGWLIWTYRTRTTVNCLITDMMAKSNSPFDFFVTTTGQTVEMSPFYDGKNKETFHERADSFHVRTNYKIVDYDNRGTNPQGERRAFLDKGTYTLSWKLENRTAYCPLQHWQTFDSTIATETGKSIHFVTDEGTSSFVTNTTVGIELPDAFKCIEEQVNKTMHEKYEAVQDRYTKGQEAITYFITSGGLLLAWLPLTPRSLATVKNLTELTTPTSSPPSSPSPPAPPAARGSTSAAVLRRRRRDAGNATTPVPPAAPGKSLGTLNNPATVQIQFAYDSLRRQINRMLGDLARAWCLEQKRQNMVLRELTKINPTTVMSSIYGKAVAAKRLGDVISVSQCVPVNQATVTLRKSMRVPGSETMCYSRPLVSFSFINDTKTYEGQLGTDNEIFLTKKMTEVCQATSQYYFQSGNEIHVYNDYHHFKTIELDGIATLQTFISLNTSLIENIDFASLELYSRDEQRASNVFDLEGIFREYNFQAQNIAGLRKDLDNAVSNGRNQFVDGLGELMDSLGSVGQSITNLVSTVGGLFSSLVSGFISFFKNPFGGMLILVLVAGVVILVISLTRRTRQMSQQPVQMLYPGIDELAQQHASGEGPGINPISKTELQAIMLALHEQNQEQKRAAQRAAGPSVASRALQAARDRFPGLRRRRYHDPETAAALLGEAETEF.

A signal peptide spans Met1–Gly21. Topologically, residues Ala22–Pro732 are virion surface. 5 disulfide bridges follow: Cys51/Cys528, Cys68/Cys484, Cys141/Cys206, Cys295/Cys342, and Cys551/Cys588. Asn76 is a glycosylation site (N-linked (GlcNAc...) asparagine; by host). The involved in fusion and/or binding to host membrane stretch occupies residues Ile108 to Ala114. The N-linked (GlcNAc...) asparagine; by host glycan is linked to Asn163. Positions Gly192–Thr200 are involved in fusion and/or binding to host membrane. 4 N-linked (GlcNAc...) asparagine; by host glycosylation sites follow: Asn290, Asn329, Asn348, and Asn395. The tract at residues Glu398–Thr452 is disordered. A compositionally biased stretch (pro residues) spans Ser404–Pro416. 3 N-linked (GlcNAc...) asparagine; by host glycosylation sites follow: Asn436, Asn563, and Asn629. Hydrophobic membrane proximal region regions lie at residues Leu678–Lys730 and Asn709–Phe729. The chain crosses the membrane as a helical span at residues Phe733–Thr753. Over Arg754–Phe857 the chain is Intravirion. Residues Phe832 to Phe857 are disordered. The segment covering Thr845 to Phe857 has biased composition (low complexity).

The protein belongs to the herpesviridae glycoprotein B family. In terms of assembly, homotrimer; disulfide-linked. Binds to heparan sulfate proteoglycans. Interacts with gH/gL heterodimer. In terms of processing, a proteolytic cleavage by host furin generates two subunits that remain linked by disulfide bonds.

It localises to the virion membrane. The protein localises to the host cell membrane. It is found in the host endosome membrane. The protein resides in the host Golgi apparatus membrane. Functionally, envelope glycoprotein that forms spikes at the surface of virion envelope. Essential for the initial attachment to heparan sulfate moieties of the host cell surface proteoglycans. Involved in fusion of viral and cellular membranes leading to virus entry into the host cell. Following initial binding to its host receptors, membrane fusion is mediated by the fusion machinery composed at least of gB and the heterodimer gH/gL. May be involved in the fusion between the virion envelope and the outer nuclear membrane during virion egress. The polypeptide is Envelope glycoprotein B (Epstein-Barr virus (strain GD1) (HHV-4)).